We begin with the raw amino-acid sequence, 368 residues long: GDP-fucose transporter 1 (368 aa).

A run of 9 helical transmembrane segments spans residues Leu-64 to Leu-84, Leu-98 to Ile-118, Val-141 to Tyr-161, Phe-166 to Leu-186, Thr-195 to Phe-215, Trp-217 to Val-237, Leu-251 to Gly-271, Phe-287 to Met-307, and Ala-332 to Ile-352.

The protein belongs to the TPT transporter family. SLC35C subfamily.

The protein resides in the golgi apparatus membrane. It carries out the reaction GMP(out) + GDP-beta-L-fucose(in) = GMP(in) + GDP-beta-L-fucose(out). In terms of biological role, antiporter specific for GDP-l-fucose and depending on the concomitant reverse transport of GMP. Involved in GDP-fucose import from the cytoplasm into the Golgi lumen. In Dictyostelium discoideum (Social amoeba), this protein is GDP-fucose transporter 1 (slc35c1).